A 419-amino-acid polypeptide reads, in one-letter code: G protein-activated inward rectifier potassium channel 4 (419 aa).

The tract at residues 1–24 (MAGDSRNAMNQDMEIGVTPRDPKK) is disordered. The Cytoplasmic segment spans residues 1 to 86 (MAGDSRNAMN…LFTTLVDLKW (86 aa)). Position 5 is a phosphoserine (Ser5). A helical membrane pass occupies residues 87–111 (RFNLLVFTMVYTITWLFFGFIWWLI). Topologically, residues 112–135 (AYIRGDLDHVGDREWIPCVENLSG) are extracellular. Positions 136 to 147 (FVSAFLFSIETE) form an intramembrane region, helical; Pore-forming. The pore-forming intramembrane region spans 148 to 154 (TTIGYGF). A Selectivity filter motif is present at residues 149-154 (TIGYGF). The Extracellular segment spans residues 155 to 163 (RVITEKCPE). The chain crosses the membrane as a helical span at residues 164–185 (GIVLLLVQAILGSIVNAFMVGC). Over 186–419 (MFVKISQPKK…SGSQETKDSA (234 aa)) the chain is Cytoplasmic. A disordered region spans residues 381 to 419 (PSPPLPGGCVGAELGAEAEQEGEEEPEGLSGSQETKDSA). Over residues 396–407 (AEAEQEGEEEPE) the composition is skewed to acidic residues.

It belongs to the inward rectifier-type potassium channel (TC 1.A.2.1) family. KCNJ5 subfamily. In terms of assembly, associates with KCNJ3/GIRK1 or KCNJ6/GIRK2 to form a G-protein-activated heteromultimer pore-forming unit. The resulting inward current is much larger.

The protein resides in the membrane. It catalyses the reaction K(+)(in) = K(+)(out). With respect to regulation, heteromultimer composed of KCNJ3/GIRK1 and KCNJ5/GIRK4 is activated by phosphatidylinositol 4,5 biphosphate (PtdIns(4,5)P2). In terms of biological role, inward rectifier potassium channels are characterized by a greater tendency to allow potassium to flow into the cell rather than out of it. Their voltage dependence is regulated by the concentration of extracellular potassium; as external potassium is raised, the voltage range of the channel opening shifts to more positive voltages. The inward rectification is mainly due to the blockage of outward current by internal magnesium. This receptor plays a crucial role in regulating the heartbeat. Can be blocked by external barium. This potassium channel is controlled by G proteins. The sequence is that of G protein-activated inward rectifier potassium channel 4 (KCNJ5) from Bos taurus (Bovine).